Here is a 312-residue protein sequence, read N- to C-terminus: tRNA dimethylallyltransferase (312 aa).

An ATP-binding site is contributed by 11 to 18 (GATATGKT). 13–18 (TATGKT) is a binding site for substrate. The interaction with substrate tRNA stretch occupies residues 36 to 39 (DSRQ).

This sequence belongs to the IPP transferase family. Monomer. The cofactor is Mg(2+).

The catalysed reaction is adenosine(37) in tRNA + dimethylallyl diphosphate = N(6)-dimethylallyladenosine(37) in tRNA + diphosphate. Functionally, catalyzes the transfer of a dimethylallyl group onto the adenine at position 37 in tRNAs that read codons beginning with uridine, leading to the formation of N6-(dimethylallyl)adenosine (i(6)A). The polypeptide is tRNA dimethylallyltransferase (Thermosynechococcus vestitus (strain NIES-2133 / IAM M-273 / BP-1)).